The sequence spans 182 residues: MSYIPELKRRYRDNIVKELVSEFQYKSIMQAPKIEKIVVSMGVGDAVKNKKLLDSAVMELSQITGQKAVKTKAKKAISGFKIRQGQEIGAKVTLRGNMMYEFLYKLVNLALPRVKDFRGINGNAFDGNGNCSFGIAEQIIFSEIDYDKIERISGLNVTIVTTALNDKEGKALLAKFGMPFSN.

It belongs to the universal ribosomal protein uL5 family. As to quaternary structure, part of the 50S ribosomal subunit; part of the 5S rRNA/L5/L18/L25 subcomplex. Contacts the 5S rRNA and the P site tRNA. Forms a bridge to the 30S subunit in the 70S ribosome.

In terms of biological role, this is one of the proteins that bind and probably mediate the attachment of the 5S RNA into the large ribosomal subunit, where it forms part of the central protuberance. In the 70S ribosome it contacts protein S13 of the 30S subunit (bridge B1b), connecting the 2 subunits; this bridge is implicated in subunit movement. Contacts the P site tRNA; the 5S rRNA and some of its associated proteins might help stabilize positioning of ribosome-bound tRNAs. This is Large ribosomal subunit protein uL5 from Borrelia duttonii (strain Ly).